A 140-amino-acid polypeptide reads, in one-letter code: Ribonuclease P protein component (140 aa).

This sequence belongs to the RnpA family. In terms of assembly, consists of a catalytic RNA component (M1 or rnpB) and a protein subunit.

The catalysed reaction is Endonucleolytic cleavage of RNA, removing 5'-extranucleotides from tRNA precursor.. Functionally, RNaseP catalyzes the removal of the 5'-leader sequence from pre-tRNA to produce the mature 5'-terminus. It can also cleave other RNA substrates such as 4.5S RNA. The protein component plays an auxiliary but essential role in vivo by binding to the 5'-leader sequence and broadening the substrate specificity of the ribozyme. The polypeptide is Ribonuclease P protein component (Ralstonia pickettii (strain 12J)).